The primary structure comprises 213 residues: Histone H1.2 (213 aa).

Residues 1–17 are compositionally biased toward low complexity; that stretch reads MSETAPAAPAAAPPAEK. The interval 1–41 is disordered; the sequence is MSETAPAAPAAAPPAEKTPVKKKAAKKPAGARRKASGPPVS. Residue Ser2 is modified to N-acetylserine; partial. Ser2 bears the Phosphoserine mark. Residue Lys17 is modified to N6-acetyllysine. Over residues 20–35 the composition is skewed to basic residues; it reads VKKKAAKKPAGARRKA. An N6-(2-hydroxyisobutyryl)lysine mark is found at Lys23, Lys26, and Lys27. Residue Lys34 is modified to N6-(beta-hydroxybutyryl)lysine; alternate. Lys34 is modified (N6-crotonyllysine; alternate). At Lys34 the chain carries N6-methyllysine; alternate. The region spanning 36 to 109 is the H15 domain; it reads SGPPVSELIT…GASGSFKLNK (74 aa). An N6-(2-hydroxyisobutyryl)lysine modification is found at Lys46. At Lys52 the chain carries N6-(beta-hydroxybutyryl)lysine; alternate. N6-(2-hydroxyisobutyryl)lysine; alternate is present on Lys52. The residue at position 54 (Arg54) is a Citrulline. Position 63 is an N6-(2-hydroxyisobutyryl)lysine (Lys63). Lys64 carries the post-translational modification N6-(beta-hydroxybutyryl)lysine; alternate. Position 64 is an N6-crotonyllysine; alternate (Lys64). Residue Lys64 is modified to N6-(2-hydroxyisobutyryl)lysine; alternate. N6-(2-hydroxyisobutyryl)lysine is present on residues Lys75 and Lys81. N6-(beta-hydroxybutyryl)lysine; alternate occurs at positions 85 and 90. Residues Lys85, Lys90, and Lys97 each carry the N6-crotonyllysine; alternate modification. N6-(2-hydroxyisobutyryl)lysine; alternate is present on residues Lys85, Lys90, and Lys97. The disordered stretch occupies residues 95–213; the sequence is QTKGTGASGS…KPKKAAPKKK (119 aa). Lys97 is subject to N6-succinyllysine; alternate. Residue Ser104 is modified to Phosphoserine; by PKC. Lys106 carries the post-translational modification N6-(beta-hydroxybutyryl)lysine. 5 positions are modified to N6-(2-hydroxyisobutyryl)lysine: Lys110, Lys117, Lys121, Lys129, and Lys136. Residues 119 to 140 are compositionally biased toward basic residues; it reads KAKKAGAAKPKKAAGAAKKTKK. A Phosphothreonine modification is found at Thr146. Lys148 is modified (N6-(2-hydroxyisobutyryl)lysine). Over residues 149 to 160 the composition is skewed to basic residues; that stretch reads KTAKKTPKKAKK. Residues Lys159 and Lys168 each carry the N6-crotonyllysine; alternate modification. 2 positions are modified to N6-(2-hydroxyisobutyryl)lysine; alternate: Lys159 and Lys168. The span at 169 to 186 shows a compositional bias: basic residues; the sequence is KVAKSPKKAKAAKPKKAA. Lys187 carries the post-translational modification N6-methyllysine; by EHMT1 and EHMT2. The residue at position 188 (Ser188) is an ADP-ribosylserine. Positions 193–213 are enriched in basic residues; the sequence is VKPKAAKPKVAKPKKAAPKKK.

It belongs to the histone H1/H5 family. In terms of processing, H1 histones are progressively phosphorylated during the cell cycle, becoming maximally phosphorylated during late G2 phase and M phase, and being dephosphorylated sharply thereafter. Crotonylation (Kcr) is specifically present in male germ cells and marks testis-specific genes in post-meiotic cells, including X-linked genes that escape sex chromosome inactivation in haploid cells. Crotonylation marks active promoters and enhancers and confers resistance to transcriptional repressors. It is also associated with post-meiotically activated genes on autosomes. Post-translationally, ADP-ribosylated on Ser-188 in response to DNA damage. In terms of processing, citrullination at Arg-54 (H1R54ci) by PADI4 takes place within the DNA-binding site of H1 and results in its displacement from chromatin and global chromatin decondensation, thereby promoting pluripotency and stem cell maintenance.

Its subcellular location is the nucleus. It localises to the chromosome. Histone H1 protein binds to linker DNA between nucleosomes forming the macromolecular structure known as the chromatin fiber. Histones H1 are necessary for the condensation of nucleosome chains into higher-order structured fibers. Also acts as a regulator of individual gene transcription through chromatin remodeling, nucleosome spacing and DNA methylation. In Bos taurus (Bovine), this protein is Histone H1.2.